A 425-amino-acid polypeptide reads, in one-letter code: GTPase Obg (425 aa).

The 158-residue stretch at 1-158 (MFVDQVKVYV…RYIVMELKLI (158 aa)) folds into the Obg domain. The interval 118-144 (KGGRGGRGNNRFANSSNPAPHISENGE) is disordered. Residues 159–327 (ADVGLVGYPS…LMYAIGDTLA (169 aa)) form the OBG-type G domain. Residues 165–172 (GYPSVGKS), 190–194 (FTTLT), 211–214 (DLPG), 281–284 (NKME), and 308–310 (SAA) each bind ATP. Residues Ser172 and Thr192 each contribute to the Mg(2+) site. The OCT domain maps to 348-425 (RAEKEPDAFE…IGKLEFDFVE (78 aa)).

The protein belongs to the TRAFAC class OBG-HflX-like GTPase superfamily. OBG GTPase family. In terms of assembly, monomer. Mg(2+) is required as a cofactor.

Its subcellular location is the cytoplasm. In terms of biological role, an essential GTPase which binds GTP, GDP and possibly (p)ppGpp with moderate affinity, with high nucleotide exchange rates and a fairly low GTP hydrolysis rate. Plays a role in control of the cell cycle, stress response, ribosome biogenesis and in those bacteria that undergo differentiation, in morphogenesis control. The polypeptide is GTPase Obg (Brevibacillus brevis (strain 47 / JCM 6285 / NBRC 100599)).